A 255-amino-acid polypeptide reads, in one-letter code: Malonyl-[acyl-carrier protein] O-methyltransferase (255 aa).

The protein belongs to the methyltransferase superfamily.

It catalyses the reaction malonyl-[ACP] + S-adenosyl-L-methionine = malonyl-[ACP] methyl ester + S-adenosyl-L-homocysteine. Its pathway is cofactor biosynthesis; biotin biosynthesis. Converts the free carboxyl group of a malonyl-thioester to its methyl ester by transfer of a methyl group from S-adenosyl-L-methionine (SAM). It allows to synthesize pimeloyl-ACP via the fatty acid synthetic pathway. The chain is Malonyl-[acyl-carrier protein] O-methyltransferase from Acinetobacter baylyi (strain ATCC 33305 / BD413 / ADP1).